Consider the following 601-residue polypeptide: Glutathione-regulated potassium-efflux system protein KefB (601 aa).

Helical transmembrane passes span 4 to 24 (SDLLLAGVLFLFAAVIAVPLA), 29 to 49 (IGAVLGYLLAGIAIGPWGLGF), 55 to 75 (EILHFSELGVVFLMFIIGLEL), 87 to 107 (IFGVGAAQVMLSAAILGGLLM), 115 to 135 (AAVVGGIGLAMSSTAMALQLM), 152 to 172 (VLLFQDLAVIPALALVPLLAG), 177 to 197 (HVNWLTVGMKVLAFAGMLIGG), 207 to 227 (FIASSGVREVFTAATLLLVLG), 230 to 250 (LFMEALGLSMALGTFIAGVLL), 268 to 288 (GLLLGLFFISVGMALNLGVLY), 291 to 311 (LLWVAVSVAVLVAVKMLVLYL), 326 to 346 (FAGVLSQGGEFAFVLFSLPAS), and 356 to 376 (ALLLVAVTLSMMTTPLLMKGI). Positions 400–519 (KPQVIIVGFG…AGVTQFSRET (120 aa)) constitute an RCK N-terminal domain.

It belongs to the monovalent cation:proton antiporter 2 (CPA2) transporter (TC 2.A.37) family. KefB subfamily. Interacts with the regulatory subunit KefG.

The protein localises to the cell inner membrane. Pore-forming subunit of a potassium efflux system that confers protection against electrophiles. Catalyzes K(+)/H(+) antiport. This is Glutathione-regulated potassium-efflux system protein KefB from Klebsiella pneumoniae subsp. pneumoniae (strain ATCC 700721 / MGH 78578).